The sequence spans 90 residues: Large ribosomal subunit protein bL27 (90 aa).

The segment at Met-1–Arg-20 is disordered.

The protein belongs to the bacterial ribosomal protein bL27 family.

The chain is Large ribosomal subunit protein bL27 from Rhodopseudomonas palustris (strain BisB18).